Reading from the N-terminus, the 555-residue chain is Serine/threonine-protein kinase Nek4 (555 aa).

Residues 4–258 (YEVLEQIGKG…ANELLNHPHL (255 aa)) form the Protein kinase domain. ATP-binding positions include 10 to 18 (IGKGSFGSA) and lysine 33. Catalysis depends on aspartate 129, which acts as the Proton acceptor. Disordered regions lie at residues 288 to 328 (LKER…MFNG), 346 to 372 (QRQE…KAST), and 443 to 477 (NRET…ITKD). Residues 304–320 (PSVSDTEAGSVSSSGKA) are compositionally biased toward polar residues.

It belongs to the protein kinase superfamily. NEK Ser/Thr protein kinase family. NIMA subfamily.

It carries out the reaction L-seryl-[protein] + ATP = O-phospho-L-seryl-[protein] + ADP + H(+). It catalyses the reaction L-threonyl-[protein] + ATP = O-phospho-L-threonyl-[protein] + ADP + H(+). Functionally, may be involved in plant development processes. The protein is Serine/threonine-protein kinase Nek4 (NEK4) of Arabidopsis thaliana (Mouse-ear cress).